Consider the following 411-residue polypeptide: 2-acylphloroglucinol 4-prenyltransferase, chloroplastic (411 aa).

The transit peptide at 1 to 91 (MELSSVSSFS…CNDQRGNSIR (91 aa)) directs the protein to the chloroplast. Transmembrane regions (helical) follow at residues 159–179 (LLGM…NQIF), 198–218 (ISVE…FILI), 226–246 (LLTS…VPPF), 253–273 (ITAF…VYYA), 278–298 (LGLA…ITFM), 333–353 (LLGT…AIIW), 356–376 (AFKS…LIFQ), and 391–411 (KSFY…YLFI).

Belongs to the UbiA prenyltransferase family. Requires Mg(2+) as cofactor. Expressed in glandular trichomes called lupulin glands, and in early stage and mature cones. Detected in leaves, but not in root, stem and first stage of flowers. No expression in male flowers.

The protein localises to the plastid. It is found in the chloroplast membrane. The enzyme catalyses a 2-acylphloroglucinol + dimethylallyl diphosphate = a 2-acyl-4-prenylphloroglucinol + diphosphate. It participates in secondary metabolite biosynthesis. Its function is as follows. Involved in the biosynthesis of prenylated phenolics natural products which contribute to the bitter taste of beer and display broad biological activities. Catalyzes the first prenylation step in the beta-bitter acid pathway. Abble to transfer dimethylallyl diphosphate (DMAPP) or geranyl diphosphate (GPP) to phlorisovalerophenone (PIVP), phlorisobutrylphenone (PIMP) and naringenin chalcone. Can also use phlorisobutyrophenone (PIBP) and phlormethylbutanophenone (PMBP) as substrates, but not 6'-O-methylated chalcone or naringenin. This is 2-acylphloroglucinol 4-prenyltransferase, chloroplastic from Humulus lupulus (European hop).